The following is a 162-amino-acid chain: Chemoreceptor glutamine deamidase CheD (162 aa).

This sequence belongs to the CheD family. In terms of assembly, forms a complex with CheC.

It carries out the reaction L-glutaminyl-[protein] + H2O = L-glutamyl-[protein] + NH4(+). Deamidates glutamine residues to glutamate on methyl-accepting chemotaxis receptors (MCPs). CheD-mediated MCP deamidation is required for productive communication of the conformational signals of the chemoreceptors to the CheA kinase. This is Chemoreceptor glutamine deamidase CheD from Halalkalibacterium halodurans (strain ATCC BAA-125 / DSM 18197 / FERM 7344 / JCM 9153 / C-125) (Bacillus halodurans).